Reading from the N-terminus, the 520-residue chain is Developmental regulatory protein wetA (520 aa).

Disordered regions lie at residues 49 to 72 (GDLP…NEWS), 104 to 165 (VPSR…MRSS), 236 to 295 (QSPS…WQSD), 367 to 453 (DHSF…GSNK), and 471 to 496 (LTGV…RRRK). Polar residues-rich tracts occupy residues 63–72 (SPQPWSNEWS), 104–114 (VPSRPTASHGL), and 155–165 (QSFSPSLMRSS). Residues 237–251 (SPSVSMPSPSIAMSA) show a composition bias toward low complexity. The segment covering 252-261 (RQQQHYIAQP) has biased composition (polar residues). Low complexity predominate over residues 262 to 295 (SSSSLTNSSPSSADDIFSSSHSSDPHSLSSWQSD). The span at 367 to 401 (DHSFSSSNMLPATPQKFDTSFNTSQVHNVSRSPSL) shows a compositional bias: polar residues. Residues 420-429 (PTHRRTHSRK) show a composition bias toward basic residues. The segment covering 436-453 (NAPKPAKASGSSSRGSNK) has biased composition (low complexity).

The protein belongs to the wetA family.

BrlA, abaA and wetA are pivotal regulators of conidiophore development and conidium maturation. They act individually and together to regulate their own expression and that of numerous other sporulation-specific genes. Responsible for activating a set of genes whose products make up the final two conidial wall layers or direct their assembly and though this activity is responsible for acquisition of spore dormancy. This Penicillium rubens (strain ATCC 28089 / DSM 1075 / NRRL 1951 / Wisconsin 54-1255) (Penicillium chrysogenum) protein is Developmental regulatory protein wetA.